The chain runs to 745 residues: Polyribonucleotide nucleotidyltransferase (745 aa).

Mg(2+)-binding residues include Asp487 and Asp493. One can recognise a KH domain in the interval Pro554–Ile613. One can recognise an S1 motif domain in the interval Gly623 to Lys691. Residues Ala693–Thr732 are disordered. Basic and acidic residues predominate over residues Asn707 to Asp719.

It belongs to the polyribonucleotide nucleotidyltransferase family. Requires Mg(2+) as cofactor.

It is found in the cytoplasm. The catalysed reaction is RNA(n+1) + phosphate = RNA(n) + a ribonucleoside 5'-diphosphate. In terms of biological role, involved in mRNA degradation. Catalyzes the phosphorolysis of single-stranded polyribonucleotides processively in the 3'- to 5'-direction. The protein is Polyribonucleotide nucleotidyltransferase of Rickettsia prowazekii (strain Madrid E).